The chain runs to 491 residues: Pre-glycoprotein polyprotein GP complex (491 aa).

G2 is lipidated: N-myristoyl glycine; by host. Residues 2–17 (GQIVTFFQEVPHIIEE) lie on the Extracellular side of the membrane. The helical transmembrane segment at 18-33 (VMNIVLITLSLLAILK) threads the bilayer. Over 34–58 (GIYNVMTCGLIGLLTFLFLCGKSCS) the chain is Cytoplasmic. C57 contributes to the Zn(2+) binding site. Over 59–432 (TIYKDNYRLM…QGTTPLGLVD (374 aa)) the chain is Extracellular. Residues N78, N88, N98, N108, N118, and N166 are each glycosylated (N-linked (GlcNAc...) asparagine; by host). 6 cysteine pairs are disulfide-bonded: C85/C231, C117/C154, C179/C212, C279/C292, C301/C310, and C364/C385. N224 carries N-linked (GlcNAc...) asparagine; by host glycosylation. Residues N365, N373, N390, and N395 are each glycosylated (N-linked (GlcNAc...) asparagine; by host). The chain crosses the membrane as a helical span at residues 433–453 (LFVFSTSFYLISVFLHLIKIP). At 454–491 (THRHLVGKPCPKPHRLNHMGVCSCGLYKQPGLPTKWKR) the chain is on the cytoplasmic side. Positions 455, 457, 463, 467, 475, and 477 each coordinate Zn(2+).

Belongs to the arenaviridae GPC protein family. In terms of assembly, interacts with glycoprotein G2. Part of the GP complex (GP-C) together with glycoprotein G1 and glycoprotein G2. The GP-complex interacts with protein Z, which interacts with ribonucleocapsid; these interactions may induce virion budding. Homotrimer; disulfide-linked. In pre-fusion state, G1 homotrimers bind G2 homotrimers via ionic interactions. Part of the GP complex (GP-C) together with glycoprotein G2 and the stable signal peptide. The GP-complex interacts with protein Z, which interacts with ribonucleocapsid; these interactions may induce virion budding. As to quaternary structure, homotrimer. Interacts with the stable signal peptide. In pre-fusion state, G2 homotrimers bind G1 homotrimers via ionic interactions. Part of the GP complex (GP-C) together with glycoprotein G1 and the stable signal peptide. Acidification in the endosome triggers rearrangements, which ultimately leads to a 6 helix bundle formed by the two heptad repeat domains (HR1 and HR2) in post-fusion state. The GP-complex interacts with protein Z, which interacts with ribonucleocapsid; these interactions may induce virion budding. In terms of processing, specific enzymatic cleavages in vivo yield mature proteins. GP-C polyprotein is cleaved in the endoplasmic reticulum by the host protease MBTPS1. Only cleaved glycoprotein is incorporated into virions. The SSP remains stably associated with the GP complex following cleavage by signal peptidase and plays crucial roles in the trafficking of GP through the secretory pathway. Post-translationally, myristoylation is necessary for GP2-mediated fusion activity.

The protein resides in the virion membrane. It is found in the host endoplasmic reticulum membrane. It localises to the host Golgi apparatus membrane. The protein localises to the host cell membrane. Functions as a cleaved signal peptide that is retained as the third component of the GP complex (GP-C). Helps to stabilize the spike complex in its native conformation. The SSP is required for efficient glycoprotein expression, post-translational maturation cleavage of G1 and G2, glycoprotein transport to the cell surface plasma membrane, formation of infectious virus particles, and acid pH-dependent glycoprotein-mediated cell fusion. Functionally, forms the virion spikes together with glycoprotein G2. The glycoprotein spike trimers are connected to the underlying matrix. Mediates virus attachment to host receptor alpha-dystroglycan DAG1. This attachment induces virion internalization predominantly through clathrin- and caveolin-independent endocytosis. Its function is as follows. Forms the virion spikes together with glycoprotein G1. The glycoprotein spike trimers are connected to the underlying matrix. Class I viral fusion protein that directs fusion of viral and host endosomal membranes, leading to delivery of the nucleocapsid into the cytoplasm. Membrane fusion is mediated by irreversible conformational changes induced by acidification. The polypeptide is Pre-glycoprotein polyprotein GP complex (Mobala mammarenavirus (isolate Rat/Central African Republic/Acar 3080/1983) (MOBV)).